Reading from the N-terminus, the 273-residue chain is GDNF family receptor alpha-4 (273 aa).

The N-linked (GlcNAc...) asparagine glycan is linked to asparagine 192. Residue asparagine 250 is the site of GPI-anchor amidated asparagine attachment. A propeptide spans 251–273 (AGCCFLWVSSMSILTALALQALL) (removed in mature form).

It belongs to the GDNFR family. Interacts with ARTN ligand and RET: forms a 2:2:2 ternary complex composed of ARTN ligand, GFRA3 and RET receptor. Interacts with SORL1. Weakly expressed in heart, brain and testis.

The protein localises to the cell membrane. It localises to the secreted. Functionally, receptor for persephin (PSPN), a growth factor that exhibits neurotrophic activity on mesencephalic dopaminergic and motor neurons. Acts by binding to its coreceptor, GFRA4, leading to autophosphorylation and activation of the RET receptor. May be important in C-cell development and, in the postnatal development of the adrenal medulla. The polypeptide is GDNF family receptor alpha-4 (Gfra4) (Rattus norvegicus (Rat)).